We begin with the raw amino-acid sequence, 822 residues long: Nucleolar complex protein 3 (822 aa).

3 disordered regions span residues 1–86 (MGTK…DGDD), 106–142 (ANKR…KEQD), and 172–199 (KPKQ…EDSD). The span at 13 to 23 (RAAHLKSKKTP) shows a compositional bias: basic residues. Basic and acidic residues predominate over residues 35 to 45 (KRDQLKSKREQ). The Nuclear localization signal signature appears at 41-48 (SKREQGQN). Over residues 76-86 (PLEEDNEDGDD) the composition is skewed to acidic residues. Positions 116–126 (TGENDPDQGQS) are enriched in polar residues. Residues 181 to 199 (EEEEDDSEEDGDTEYEDSD) show a composition bias toward acidic residues. Serine 187 is modified (phosphoserine). The residue at position 193 (threonine 193) is a Phosphothreonine. A Phosphoserine modification is found at serine 198. Positions 445–509 (KIKNVNLDAE…NKQAKHQKLT (65 aa)) form a coiled coil.

This sequence belongs to the CBF/MAK21 family.

Its subcellular location is the nucleus. The protein localises to the nucleolus. The chain is Nucleolar complex protein 3 from Drosophila melanogaster (Fruit fly).